A 153-amino-acid polypeptide reads, in one-letter code: Protein-export protein SecB (153 aa).

The protein belongs to the SecB family. In terms of assembly, homotetramer, a dimer of dimers. One homotetramer interacts with 1 SecA dimer.

It is found in the cytoplasm. Its function is as follows. One of the proteins required for the normal export of preproteins out of the cell cytoplasm. It is a molecular chaperone that binds to a subset of precursor proteins, maintaining them in a translocation-competent state. It also specifically binds to its receptor SecA. This Edwardsiella ictaluri (strain 93-146) protein is Protein-export protein SecB.